We begin with the raw amino-acid sequence, 387 residues long: Phosphoglycerate kinase (387 aa).

Residues 21–23, R36, 59–62, R113, and R146 each bind substrate; these read DLN and HLGR. ATP-binding positions include K197, E314, and 340–343; that span reads GGDT.

This sequence belongs to the phosphoglycerate kinase family. Monomer.

It localises to the cytoplasm. The catalysed reaction is (2R)-3-phosphoglycerate + ATP = (2R)-3-phospho-glyceroyl phosphate + ADP. The protein operates within carbohydrate degradation; glycolysis; pyruvate from D-glyceraldehyde 3-phosphate: step 2/5. The chain is Phosphoglycerate kinase from Pseudomonas fluorescens (strain Pf0-1).